The primary structure comprises 352 residues: Putative formin-like protein 15b (352 aa).

Residues 1–350 form the FH2 domain; the sequence is MTLFNFIKLF…KDAKEAEMEK (350 aa).

The protein belongs to the formin-like family. Class-II subfamily.

The polypeptide is Putative formin-like protein 15b (FH15B) (Arabidopsis thaliana (Mouse-ear cress)).